Reading from the N-terminus, the 208-residue chain is Truncated thymidylate kinase (208 aa).

Belongs to the thymidylate kinase family.

Functionally, catalyzes the conversion of dTMP to dTDP. This is Truncated thymidylate kinase (TMK) from Ornithodoros (relapsing fever ticks).